The chain runs to 396 residues: Acetate kinase (396 aa).

Asparagine 8 provides a ligand contact to Mg(2+). Lysine 15 contributes to the ATP binding site. Residue arginine 89 coordinates substrate. Aspartate 146 serves as the catalytic Proton donor/acceptor. Residues 206-210 (HIGNG), 283-285 (DMR), and 331-335 (GIGEN) each bind ATP. Residue glutamate 383 participates in Mg(2+) binding.

Belongs to the acetokinase family. As to quaternary structure, homodimer. It depends on Mg(2+) as a cofactor. Mn(2+) is required as a cofactor.

It localises to the cytoplasm. The enzyme catalyses acetate + ATP = acetyl phosphate + ADP. Its pathway is metabolic intermediate biosynthesis; acetyl-CoA biosynthesis; acetyl-CoA from acetate: step 1/2. In terms of biological role, catalyzes the formation of acetyl phosphate from acetate and ATP. Can also catalyze the reverse reaction. The sequence is that of Acetate kinase from Streptococcus gordonii (strain Challis / ATCC 35105 / BCRC 15272 / CH1 / DL1 / V288).